We begin with the raw amino-acid sequence, 299 residues long: ATP phosphoribosyltransferase (299 aa).

It belongs to the ATP phosphoribosyltransferase family. Long subfamily. Mg(2+) serves as cofactor.

It localises to the cytoplasm. The enzyme catalyses 1-(5-phospho-beta-D-ribosyl)-ATP + diphosphate = 5-phospho-alpha-D-ribose 1-diphosphate + ATP. The protein operates within amino-acid biosynthesis; L-histidine biosynthesis; L-histidine from 5-phospho-alpha-D-ribose 1-diphosphate: step 1/9. With respect to regulation, feedback inhibited by histidine. Catalyzes the condensation of ATP and 5-phosphoribose 1-diphosphate to form N'-(5'-phosphoribosyl)-ATP (PR-ATP). Has a crucial role in the pathway because the rate of histidine biosynthesis seems to be controlled primarily by regulation of HisG enzymatic activity. This is ATP phosphoribosyltransferase from Shewanella sp. (strain ANA-3).